The following is a 199-amino-acid chain: Recombination protein RecR (199 aa).

The segment at 57 to 72 (CSICGNITDKDPCYVC) adopts a C4-type zinc-finger fold. The region spanning 80–176 (TIVCVVQDSR…RVTRIAHGLP (97 aa)) is the Toprim domain.

This sequence belongs to the RecR family.

May play a role in DNA repair. It seems to be involved in an RecBC-independent recombinational process of DNA repair. It may act with RecF and RecO. This Exiguobacterium sibiricum (strain DSM 17290 / CCUG 55495 / CIP 109462 / JCM 13490 / 255-15) protein is Recombination protein RecR.